The chain runs to 8799 residues: MATSRASSRSHRDITNVMQRLQDEQEIVQKRTFTKWINSHLAKRKPPMVVDDLFEDMKDGIKLLALLEVLSGQKLPCEQGHRVKRIHAVANIGTALKFLEGRKIKLVNINATDIADGRPSIVLGLMWTIILYFQIEELTSNLPQLQSLSSSASSVDSMVSTETASPPSKRKVAAKIQGNAKKTLLKWVQHTAGKQMGIEVKDFGKSWRTGLAFHSVIHAIQPELVDLEKVKTRSNRENLEDAFTIAETQLGIPRLLDPEDVDVDKPDEKSIMTYVAQFLTQYPDIHGAGCDGQEDDVVFVGFTNNIALLLGFQRDDRLILKETKVWIEQFERDFTRAQMTESSLQDKYQAFKHFRVQYEMKRKQVEHIIQPLQRDGKLTLDQALVKQCWERVSSRLFDWHIQLDKSLPAPLGTIGAWLYRAEVALREEITIQQVHEETANTIQRKLEQHKDLLQNTDAHKRAFHEIYQTRSVNGIPMPPDQLEDMAERFHFVSSTSELHLMKMEFLELKYRLLSLLVLAESKLKSWIIKYGRRESVELLLQSYISFIENSKFFEQYEVTYQILKQTADIYVKAEGSVEEAENVMKFMSEATAQWRNLSVEVRSVRSMLEEVISNWDRYGDTVASLQAWLEDAEKMLSQSEHAKKDFFRNLPHWIQQHTAMNDAGNFLIETCDEIVSRDLKQQLLLLNGRWRELFMEVKQYARADEMDRMKKEYIDVTTTLFGFATEAHRKLSEPLEVSFINVKLLIQDLEDLEKRVPVMDAQYKMIAKKAHLFAKESPQEEANEMLTTMSKLKEQLSKVKECCSPLLYEAQQLTVPLEELETQITSFYDSLGKINEILSVLEQEAQSSTLFKQKHQELLASQENCKKSLTLIEKGSQSVQKLVTSSQARKPWDHTKLQKQIADVHHAFQSMIKKTGDWKKHVEANSRLMKKFEESRAELEKVLRVAQEGLEEKGDPEELLRRHTEFFSQLDQRVLNAFLKACDELTDILPEQEQQGLQEAVRKLHKQWKDLQGEAPYHLLHLKIAVEKDRFSAAVEECRAELEQETKLAPQEGSEKIIKEHRVFFSDKGPHHLCEKRLQLIEELCGKLPVQDPVRDTCGACHTALKELKASIDNTYTMLVDDPDKWKDYTSRFSEFSSWVSAKKACLKKIKDEPIDTGNHDEVKHMVDEIRNDITKKGESLSWLKSRLKYLIDISSENEAQKRGDELAELSSSFKALVALLSEVEKLLSNFGECVQYKEIVKSSLEGLISGPQESKEEAEMILDSKNLLEAQQLLLHHQQKTKMISAKKRDLQEQMEQAQQGGQAGPGQEELRKLESTLTGLEQSRERQERRIQVSLRKWERFETNKETVVRYLFQTGSSHERFLSFSSLESLSSELEQTKEFSKRTESIATQAENLVKEAAELPLGPRNKRVLQRQAKSIKEQVTTLEDTLEEDIKTMEMVKSKWDHFGSNFETLSIWILEKENELSSLEASASAADVQISQIKVTIQEIESKIDSIVGLEEEAQSFAQFVTTGESARIKAKLTQIRRYWEELQEHARGLEGTILGHLSQQQKFEENLRKIRQSVSEFAERLADPIKICSSAAETYKVLQEHMDLCQAVESLSSTVTMFSASAQKAVNRESCTQEAAALQQQYEEILHKAKEMQTALEDLLARWQRLEKGLSPFLTWLERCEAIASSPEKDISADRGKVESELQLIQALQNEVVSQASLYSNLLQLKEALFSVASKEDVAVMKLQLEQLDERWGDLPQIISKRMHFLQSVLAEHKQFDELLFSFSVWIKQFLGELQRTSEINLRDHQVALTRHKDHAAEIEKKRGEITHLQGHLSQLRSLGRAQDLHPLQSKVDDCFQLFEEASQVVERRKLALAQLAEFLQSHACMSTLLYQLRQTVEATKSMSKKQSDSLKTDLHSAIQDVKTLESSAISLDGTLTKAQCHLKSASPEERTSCRATTDQLSLEVERIQNLLGTKQSEADALVALKEAFREQKEELLRSIEDIEERMDRERLKVPTRQALQHRLRVFNQLEDELNSHEHELCWLKDKAKQIAQKDVAFAPEVDREINGLEATWDDTRRQIHENQGQCCGLIDLVREYQSLKSTVCNVLEDASNVVVMRATIKDQGDLKWAFSKHETSRNEMNSKQKELDSFTSKGKHLLSELKKIHSGDFSLVKTDMESTLDKWLDVSERIEENMDMLRVSLSIWDDVLSRKDEIEGWSNSSLPKLAENISNLNNSLRAEELLKELESEVKIKALKLEDLHSKINNLKELTKNPETPTELQFIEADLRQKLEHAKEITEEARGTLKDFTAQRTQVERFVKDITAWLINVEESLTRCAQTETCEGLKKAKDIRKELQSQQNSITSTQEELNSLCRKHHSVELESLGRAMTGLIKKHEATSQLCSQTQARIQDSLEKHFSGSMKEFQEWFLGAKAAARESSNLTGDSQILEARLHNLQGVLDSLSDGQSKLDVVTQEGQTLYAHLPKQIVSSIQEQITKANEEFQAFLKQCLKEKQALQDCVSELGSFEDQHRKLNLWIHEMEERLKTENLGESKHHISEKKNEVRKVEMFLGELLAARESLDKLSQRGQLLSEESHSAGKGGCRSTQLLTSYQSLLRVTKEKLRSCQLALKEHEALEEATQSMWARVKDVQDRLACAESTLGNKETLEGRLSQIQDILLMKGEGEVKLNLAIGKGDQALRSSNKEGQQAIQDQLEMLKKAWAEAMNSAVHAQSTLESVIDQWNDYLEKKSQLEQWMESVDQRLEHPLQLQPGLKEKFSLLDHFQSIVSEAEDHTGALQQLAAKSRELYQKTQDESFKEAGQEELRTQFQDIMTVAKEKMRTVEDLVKDHLMYLDAVQEFADWLHSAKEELHRWSDTSGDPSATQKKLLKIKELIDSREIGAGRLSRVESLAPAVKQNTAASGCELLNSEMQALRADWRQWEDCLFQTQSSLESLVSEMALSEQEFFGQVTQLEQALEQFCTLLKTWAQQLTLLEGKNSDEEILECWHKGREILDALQKAEPMTEDLKSQLNELCRFSRDLSPYSEKVSGLIKEYNCLCLQASKGCQNKEQILQERFQKASRGFQQWLVNAKITTAKCFDLPQNLSEVSSSLQKIQEFLSESENGQHKLNTMLFKGELLSSLLTEEKAQAVQAKVLTAKEEWKSFHANLHQKESALENLKIQMKDFEVSAELVQNWLSKTERLVQESSNRLYDLPAKRREQQKLQSVLEEIQCYEPQLHRLKEKARQLWEGQAASKSFVHRVSQLSSQYLALSNVTKEKVSRLDRIIAEHNRFSQGVKELQDWMSDAVHMLDSYCLPTSDKSVLDSRMLKLEALLSVRQEKEIQMKMVVTRGEYVLQSTSLEGSAAVQQQLQAVKDMWESLLSAAIRCKSQLEGALSKWTSYQDDVRQFSSWMDSVEVSLTESEKQHTELREKITALGKAKLLNEEVLSHSSLLETIEVKRAAMTEHYVTQLELQDLQERHQALKEKAKEAVTKLEKLVRLHQEYQRDLKAFESWLEQEQEKLDRCSVHEGDTNAHETMLRDLQELQVRCAEGQALLNSVLHTREDVIPSGLPQAEDRVLESLRQDWQVYQHRLAEARMQLNNVVNKLRLMEQKFQQADEWLKRMEEKINFRSECQSSRSDKEIQLLQLKKWHEDLSAHRDEVEEVGTRAQGILDETHISSRMGCQATQLTSRYQALLLQVLEQIKFFEEELQCLEETESSLSSYSDWYGSTHKNFKNVATKIDKVDESMMGKKLKTLEVLLKDMEKGHSLLKSAREKGERAMKFLAEHEAEALRKEIHTYMEQLKNLTSTVRKECMSLEKGLHLAKEFSDKYKVLAQWMAEYQEILCTPEEPKMELYEKKAQLSKYKSLQQMVLSHEPSVTSVQEKSEALLELVQDQSLKDKIQKLQSDFQDLCSRAKERVFSLEAKVKDHEDYNTELQEVEKWLLQMSGRLVAPDLLEMSSLETITQQLAHHKAMMEEIAGFEDRLDNLKAKGDTLIGQCPEHLQAKQKQTVQAHLQGTKDSYSAICSTAQRVYRSLEYELQKHVSSQDTLQQCQAWISAVQPDLKPSPQPPLSRAEAVKQVKHFRALQEQARTYLDLLCSMCDLSNSSVKNTAKDIQQTEQLIEQRLVQAQNLTQGWEEIKSLKAELWIYLQDADQQLQNMKRRHTELEINIAQNMVMQVKDFIKQLQCKQVSVSTIVEKVDKLTKNQESPEHKEITHLNDQWQDLCLQSDKLCAQREQDLQRTSSYHDHMRVVEAFLEKFTTEWDSLARSNAESTAIHLEALKKLALALQEEMYAIDDLKDCKQKLIEQLGLDDRELVREQTSHLEQRWFQLQDLVKRKIQVSVTNLEELNVIQSRFQELMEWAEEQQPNIVEALKQSPPPGMAQHLLMDHLAICSELEAKQVLLKSLMKDADRVMADLGLNERKVIQKALSEAQKHVSCLSDLVGQRRKYLNKALSEKTQFLMAVFQATSQIQQHERKIVFREYICLLPDDVSKQVKTCKTAQASLKTYQNEVTGLCAQGRELMKGITKQEQEEVLGKLQELQTVYDTVLQKCSHRLQELEKSLVSRKHFKEDFDKACHWLKQADIVTFPEINLMNEKTELHAQLDKYQSILEQSPEYENLLLTLQTTGQAMLPSLNEVDHSYLSEKLSALPQQFNVIVALAKDKFYKTQEAILARKEYTSLIELTTQSLGDLEDQFLKMRKMPSDLIVEESVSLQQSCSALLGEVVALGEAVNELNQKKESFRSTGQPWQPEKMLQLATLYHRLKRQAEQRVSFLEDTTSVYKEHAQMCRQLESQLEVVKREQAKVNEETLPAEEKLKVYHSLAGSLQDSGILLKRVATHLEDLSPHLDPTAYEKAKSQVQSWQEELKQMTSDVGELVTECESRMVQSIDFQTEMSRSLDWLRRVKAELSGPVCLDLSLQDIQEEIRKIQIHQEEVLSSLRIMSALSHKEQEKFTKAKELISADLEHTLAELQELDGDVQEALRTRQATLTEIYSRCQRYYQVFQAANDWLDDAQEMLQLAGNGLDVESAEENLRSHMEFFKTEGQFHSNMEELRGLVARLDPLIKATGKEELAQKMASLEKRSQGIIQESHTQRDLLQRCMVQWQEYQKAREGVIELMNDAEKKLSEFAVLKTSSIHEAEEKLSKHKALVSVVDSFHEKIVALEEKASQLEQTGNDTSKATLSRSMTTVWQRWTRLRAVAQDQEKILEDAVDEWKRLSAKVKETTEVINQLQGRLPGSSTEKASKAELMTLLESHDTYLMDLESQQLTLGVLQQRALSMLQDRAFPGTEEEVPILRAITALQDQCLNMQEKVKNHGKLVKQELQEREAVETRINSVKSWVQETKDYLGNPTIEIDTQLEELKRLLAEATSHQESIEKIAEEQKNKYLGLYTVLPSEISLQLAEVALDLKIHDQIQEKVQEIEEGKAMSQEFSCKIQKVTKDLTTILTKLKAKTDDLVHAKAEHKMLGEELDGCNSKLMELDAAIQTFSERHSQLGQPLAKKIGKLTELHQQTIRQAENRLSKLNQALSHMEEYNEMLETVRKWIEKAKVLVHGNIAWNSASQLQEQYILHQTLLEESGEIDSDLEAMAEKVQHLANVYCTGKLSQQVTQFGREMEELRQAIRVRLRNLQDAAKDMKKFEGELRNLQVALEQAQTILTSPEVGRRSLKEQLCHRQHLLSEMESLKPKMQAVQLCQSALRIPEDVVASLPLCHAALRLQEEASQLQHTAIQQCNIMQAKKHSLIFPPKEAVVQYEQYKQEMKHLQQLIEEAHREIEDKPVATSNIQELQAQISLHEELAQKIKGYQEQIDSLNSKCKMLTMKAKHATMLLTVTEVEGLAEGTEDLDRELHPTPSAHPSVVMMTAGRCHTLLSPVTEESGEEGTNSEISSPPACRSPSPVANTEAAVNQDIAYYQALSAEGLQTDAARIPPSAAVSQELYEPGLEPSATAKLGDLQRSWETLKNVISEKQRTLYEVLERQQKYQDSLQSISTKMEAMEMKLGESLEPSRSPESQMAEHQALMDEVQMLQDEINGLQVSLAEELVAESQESDPAEQLALQSTLTVLAERMSTIRMKAAGKRQLLEEKLSDQLEEQRQEQALQRYRCEADELDHWLLNTKATLDVALGTSQEPMDMDAQLVDCQNMLVEIEQKVVALSQLSVHNENLLLEGKAHTKEEAEQLAVKLRLLKGSLGELQRALHDRQLDMQGVTQEKEENDVDFTDTQSPGVQEWLAQARTTRTHQRQSSLQQQKEFEQELAEQKSLLRSVASRGEEILTQHSTAEGSGGLGEKPDVLSQELGIAEDQMRVKWESLHQEFSAKQKLLQNILEQEQEQVLYSSPNRLLSGVLPFRGEAQTQDKTSVTSLLDGLSQAFGEASSQSGGTDRQSIHLEQKLYDGVSATSTWLNDVEERLFVATAPLPEETEACLFNQEALAKDIKEMSEEMDKNKNLFSQAFPEDSDNRDVIEDTLGCLLGRLSLLDSVVDQRCHQMKERLQQILRFQNDLKVLFTSLADSKYIILQKLANVFEQPIVEQMQAIQQAEEGLRDLEGGISELKRWADKLQVEQSAVQELSKLQDMYDELLMTVSSRRSSLHQNLALKSQYDKALQDLVDLLDTGQEKMTGDQKIIVCSKEEIQQLLGKHKEYFQGLESHMILTEILFRKIVGFAAVKETQFHTDCMAQASAVLKQAHKRGVELEYILEMWSHLDENRQELSRQLEVIENSIPSVGLVEESEDRLVERTNLYQHLKSSLNEYQPKLYQALDDGKRLLMSVSCSELESQLNQLGEHWLSNTNKVSKELHRLETILKHWTRYQSEAAALNHWLQCAKDRLAFWTQQSVTVPQELEMVRDHLSAFLEFSKEVDAKSALKSSVTSTGNQLLRLKKVDTAALRAELSRMDSQWTDLLTGIPVVQEKLHQLQMDKLPSRHAISEVMSWISLMESVILKDEEDIRNAIGYKAIHEYLQKYKGFKIDLNCKQLTADFVNQSVLQISSQDVESKRSDKTDFAEQLGAMNKSWQLLQGRVGEKIQMLEGLLESWSEYENSVQSLKAWFANQERKLKEQHLLGDRNSVENALKDCQELEDLIKAKEKEVEKIEQNGLALIQNKREEVSGSVMSTLQELRQTWISLDRTVEQLKIQLTSALGQWSNHKAACDEINGHLMEARYSLSRFRLLTGSSEAVQVQVDNLQNLHDELEKQEGGLQKFGSITNQLLKECHPPVAETLSSTLQEVNMRWNNLLEEIAEQLHSSKALLQLWQRYKDYSKQCASAIQRQEEQTSVLLKAATNKDIADDEVTKWIQDCNDLLKGLETVKDSLFILRELGEQLGQQVDVSAAAAIQCEQLCFSQRLGALEQALCKQQAVLQAGVVDYETFAKSLEALEVWMVEAEGILQGQDPTHSSDLSTIQERMEELKGQMLKFSSLAPDLDRLNELGYRLPLNDKEIKRMQNLNRHWSLTSSQTTERFSKLQSFLLQHQTFLEKCETWMEFLVQTEHKLAVEISGNYQHLLEQQRAHELFQAEMFSRQQILHSIIVDGQNLLEQGQVDDREEFSLKLTLLSNQWQGVIRRAQQRRGIIDSQIRQWQRYREMAEKLRKWLAEVSHLPLSGLGNIPVPLQQVRMLFDEVQFKEKVFLRQQGSYILTVEAGKQLLLSADSGAEAALQAELTDIQEKWKAASMHLEEQKKKLAFLLKDWEKCERGIANSLEKLRMFKKRLSQPLPDHHEELHAEQMRCKELENAVGRWTDDLTELMLVRDALAVYLSAEDISMLKERVELLQRQWEELCHQVSLRRQQVSERLNEWAVFSEKNKELCEWLTQMESKVSQNGDILIEEMIEKLKKDYQEEIAVAQENKIQLQEMGERLAKASHESKASEIQYKLSRVKDRWQHLLDLMAARVKKLKETLVAVQQLDKNMGSLRTWLAHMESELAKPIVYDSCNSEEIQRKLNEQQELQRDIEKHSTGVASVLNLCEVLLHDCDACATDAECDSIQQATRNLDRRWRNICAMSMERRLKIEETWRLWQKFLDDYSRFEDWLEVSERTAAFPSSSGVLYTVAKEELKKFEAFQRQVHESLTQLELINKQYRRLARENRTDSACSLRQMVHGGNQRWDDLQKRVTSILRRLKHFISQREEFETARDSILVWLTEMDLQLTNIEHFSECDVQAKIKQLKAFQQEISLNHNKIEQIIAQGEQLIEKSEPLDAAVIEEELDELRRYCQEVFGRVERYHKKLIRLPVRLPDDHDLSDRELDLEDSTALSDLRWQDPSADGMPSPQPSSNPSLSLPQPLRSERSGRDTPASVDSIPLEWDHDYDLSRDLESASRTLPSEDEEGEEDKEFYLRGAVGLSGDPSSLESQMRQLDKALDDSRFQIQQTANILRSKTPTGPDLDTSYKGYMKLLGECSGSIDSVRRLEHKLAEEESFPGFVNLNSTETQTAGVIDRWELLQAQAMSKELRMKQNLQKWQQFNSDLNNIWAWLGETEEELDRLQHLALSTDIHTIESHIKKLKELQKAVDHRKAIILSINLCSSEFTQADSKESHDLQDRLSQMNGRWDRVCSLLEDWRGLLQDALMQCQEFHEMSHALLLMLENIDRRKNEIVPIDSTLDPETLQDHHKQLMQIKQELLKSQLRVASLQDMSRQLLVNAEGSDCLEAKEKVHVIGNRLKLLLKEVSHHIKDLEKLLDMSSSQQDLSSWSSADELDTSGSVSPTSGRSTPNRQKSPRGKCSLSQPGPSVSSPKSRSTRDGSDSSRSDPRPERVGRAFLFRILRAALPFQLLLLLLIGLTCLVPMSEKDYSCALSNNFARSFHPMLRYTNGPPPL.

The actin-binding stretch occupies residues 1-289 (MATSRASSRS…TQYPDIHGAG (289 aa)). Residues 1–8748 (MATSRASSRS…GRAFLFRILR (8748 aa)) lie on the Cytoplasmic side of the membrane. 2 Calponin-homology (CH) domains span residues 27-134 (IVQK…LYFQ) and 178-283 (GNAK…TQYP). Spectrin repeat units follow at residues 314 to 397 (RDDR…SRLF), 398 to 502 (DWHI…HLMK), 503 to 609 (MEFL…SMLE), 610 to 703 (EVIS…YARA), 704 to 815 (DEMD…QLTV), 816 to 923 (PLEE…KHVE), 924 to 1024 (ANSR…HLKI), 1025 to 1122 (AVEK…LVDD), 1123 to 1246 (PDKW…SSLE), 1247 to 1333 (GLIS…ERRI), 1334 to 1442 (QVSL…MEMV), 1443 to 1548 (KSKW…ILGH), 1549 to 1651 (LSQQ…LEDL), 1652 to 1761 (LARW…LQSV), 1762 to 1877 (LAEH…SHAC), 1878 to 1974 (MSTL…ADAL), 1975 to 2079 (VALK…QGQC), 2080 to 2193 (CGLI…LRVS), 2194 to 2301 (LSIW…KDFT), 2302 to 2399 (AQRT…QTQA), 2400 to 2511 (RIQD…LQDC), 2512 to 2617 (VSEL…LRSC), 2618 to 2729 (QLAL…LESV), 2730 to 2836 (IDQW…VEDL), 2837 to 2960 (VKDH…FGQV), 2961 to 3060 (TQLE…QNKE), 3061 to 3169 (QILQ…LENL), 3170 to 3273 (KIQM…VSRL), 3274 to 3385 (DRII…LEGA), 3386 to 3488 (LSKW…LEKL), 3489 to 3591 (VRLH…RMQL), 3592 to 3718 (NNVV…YSDW), 3719 to 3812 (YGST…LEKG), 3813 to 3918 (LHLA…LEAK), 3919 to 4026 (VKDH…QRVY), 4027 to 4137 (RSLE…KSLK), 4138 to 4233 (AELW…REQD), 4234 to 4337 (LQRT…IQVS), 4338 to 4449 (VTNL…LNKA), 4450 to 4558 (LSEK…LEKS), 4559 to 4667 (LVSR…TQEA), 4668 to 4774 (ILAR…LEDT), 4775 to 4880 (TSVY…CESR), 4881 to 4989 (MVQS…LTEI), 4990 to 5097 (YSRC…LQRC), 5098 to 5207 (MVQW…LEDA), 5208 to 5316 (VDEW…GKLV), 5317 to 5422 (KQEL…EEGK), 5423 to 5520 (AMSQ…LSKL), 5521 to 5628 (NQAL…LQDA), 5629 to 5745 (AKDM…PKEA), and 5746 to 5851 (VVQY…PSAH). Positions 314–8666 (RDDRLILKET…DLEKLLDMSS (8353 aa)) form a coiled coil. Lysine 377 is modified (phosphoserine). Position 732 is a phosphoserine (serine 732). Residues 1288-1310 (KKRDLQEQMEQAQQGGQAGPGQE) are disordered. Position 2268 is a phosphothreonine (threonine 2268). Serine 5655 is subject to Phosphoserine. A disordered region spans residues 5868–5894 (PVTEESGEEGTNSEISSPPACRSPSPV). Spectrin repeat units lie at residues 5971–6080 (LERQ…LEEK), 6081–6187 (LSDQ…SLGE), 6377–6488 (RQSI…RLQQ), 6489–6584 (ILRF…RSSL), 6585–6694 (HQNL…LEMW), 6695–6798 (SHLD…TILK), 6799–6905 (HWTR…QEKL), 6906–7023 (HQLQ…LEGL), 7024–7131 (LESW…LTSA), 7132–7240 (LGQW…SKAL), 7241–7353 (LQLW…LQAG), 7354–7457 (VVDY…LQSF), 7458–7561 (LLQH…RGII), 7562–7674 (DSQI…LAFL), 7675–7786 (LKDW…NEWA), 7787–7886 (VFSE…LKET), 7887–8000 (LVAV…IEET), 8001–8109 (WRLW…LKHF), and 8110–8221 (ISQR…VRLP). 2 positions are modified to phosphoserine: aspartate 8225 and serine 8227. A disordered region spans residues 8237–8287 (TALSDLRWQDPSADGMPSPQPSSNPSLSLPQPLRSERSGRDTPASVDSIPL). A compositionally biased stretch (low complexity) spans 8257-8269 (PSSNPSLSLPQPL). Threonine 8278 is modified (phosphothreonine). Phosphoserine is present on residues serine 8281, serine 8284, and serine 8308. Spectrin repeat units lie at residues 8332–8440 (SSLE…MKQN), 8441–8550 (LQKW…LQDA), and 8551–8668 (LMQC…SSSQ). At threonine 8363 the chain carries Phosphothreonine. Residues 8673 to 8735 (SWSSADELDT…SDSSRSDPRP (63 aa)) form a disordered region. Composition is skewed to polar residues over residues 8682–8698 (TSGSVSPTSGRSTPNRQ) and 8706–8718 (SLSQPGPSVSSPK). A compositionally biased stretch (basic and acidic residues) spans 8721–8735 (STRDGSDSSRSDPRP). Residues 8740–8799 (RAFLFRILRAALPFQLLLLLLIGLTCLVPMSEKDYSCALSNNFARSFHPMLRYTNGPPPL) enclose the KASH domain. A helical; Anchor for type IV membrane protein membrane pass occupies residues 8749 to 8769 (AALPFQLLLLLLIGLTCLVPM). Over 8770-8799 (SEKDYSCALSNNFARSFHPMLRYTNGPPPL) the chain is Perinuclear space.

It belongs to the nesprin family. In terms of assembly, core component of LINC complexes which are composed of inner nuclear membrane SUN domain-containing proteins coupled to outer nuclear membrane KASH domain-containing nesprins. SUN and KASH domain-containing proteins seem to bind each other promiscuously; however, differentially expression of LINC complex constituents can give rise to specific assemblies. At least SUN1/2-containing core LINC complexes are proposed to be hexameric composed of three protomers of each KASH and SUN domain-containing protein. The SUN2:SYNE1/KASH1 LINC complex is a heterohexamer; the homotrimeric cloverleave-like conformation of the SUN domain is a prerequisite for LINC complex formation in which three separate SYNE1/KASH1 peptides bind at the interface of adjacent SUN domains. Self-associates. Interacts with SYNE3. Interacts with SUN3; proposed to form a spermatogenesis-specific LINC complex with SUN3 during sperm head formation. May interact with MUSK. Interacts with SPAG4/SUN4. Interacts with EMD and LMNA in vitro. Interacts with F-actin via its N-terminal domain. Interacts with DCTN1 and DYNC1I1/2; suggesting the association with the dynein-dynactin motor complex. Interacts (via KASH domain) with TMEM258. In terms of processing, the disulfid bond with SUN1 or SUN2 is required for stability of the respective LINC complex under tensile forces. As to expression, expressed in C2F3 and CH310T1/2 cells, brain and skeletal muscle (at protein level).

The protein resides in the nucleus outer membrane. It localises to the nucleus. Its subcellular location is the nucleus envelope. The protein localises to the cytoplasm. It is found in the cytoskeleton. The protein resides in the myofibril. It localises to the sarcomere. Functionally, multi-isomeric modular protein which forms a linking network between organelles and the actin cytoskeleton to maintain the subcellular spatial organization. As a component of the LINC (LInker of Nucleoskeleton and Cytoskeleton) complex involved in the connection between the nuclear lamina and the cytoskeleton. The nucleocytoplasmic interactions established by the LINC complex play an important role in the transmission of mechanical forces across the nuclear envelope and in nuclear movement and positioning. May be involved in nucleus-centrosome attachment. During interkinetic nuclear migration (INM) at G2 phase and nuclear migration in neural progenitors its LINC complex association with SUN1/2 and probably association with cytoplasmic dynein-dynactin motor complexes functions to pull the nucleus toward the centrosome; SYNE1 and SYNE2 seem to act redundantly in cerebellum, midbrain, brain stem, and other brain regions except cerebral cortex and hippocampus. Required for centrosome migration to the apical cell surface during early ciliogenesis. May be involved in nuclear remodeling during sperm head formation in spermatogenesis; a probable SUN3:SYNE1/KASH1 LINC complex may tether spermatid nuclei to posterior cytoskeletal structures such as the manchette. This is Nesprin-1 from Mus musculus (Mouse).